A 37-amino-acid polypeptide reads, in one-letter code: Cytochrome b6-f complex subunit 5 (37 aa).

A helical membrane pass occupies residues 5–25 (LLSGIVLGLMPVTLAGLFTTA).

This sequence belongs to the PetG family. As to quaternary structure, the 4 large subunits of the cytochrome b6-f complex are cytochrome b6, subunit IV (17 kDa polypeptide, PetD), cytochrome f and the Rieske protein, while the 4 small subunits are PetG, PetL, PetM and PetN. The complex functions as a dimer.

It localises to the plastid. The protein localises to the chloroplast thylakoid membrane. Functionally, component of the cytochrome b6-f complex, which mediates electron transfer between photosystem II (PSII) and photosystem I (PSI), cyclic electron flow around PSI, and state transitions. PetG is required for either the stability or assembly of the cytochrome b6-f complex. The polypeptide is Cytochrome b6-f complex subunit 5 (Ostreococcus tauri).